The sequence spans 639 residues: Serine protease HtrA-like (639 aa).

Composition is skewed to basic and acidic residues over residues 1–13 (MDNDKKHVIPREQ), 21–75 (YFHN…EIHQ), 106–187 (QQLK…KESS), and 195–205 (KSQKIEQKEQK). The tract at residues 1-262 (MDNDKKHVIP…LENEPKNNDT (262 aa)) is disordered. Polar residues predominate over residues 206-219 (ASSNETSNKELNSY). Composition is skewed to basic and acidic residues over residues 220-235 (TKDKNNKVEDNQDLKK) and 245-262 (NKLEENEHLENEPKNNDT). A helical transmembrane segment spans residues 277–297 (IVIVVAIILIVILISAIISTM). Active-site charge relay system residues include His374, Asp404, and Ser489. Positions 527 to 629 (EIAEELEKKG…TLSAKIYREG (103 aa)) constitute a PDZ domain.

Belongs to the peptidase S1C family.

The protein localises to the cell membrane. The protein is Serine protease HtrA-like of Staphylococcus haemolyticus (strain JCSC1435).